The sequence spans 168 residues: Large ribosomal subunit protein uL10 (168 aa).

The protein belongs to the universal ribosomal protein uL10 family. As to quaternary structure, part of the ribosomal stalk of the 50S ribosomal subunit. The N-terminus interacts with L11 and the large rRNA to form the base of the stalk. The C-terminus forms an elongated spine to which L12 dimers bind in a sequential fashion forming a multimeric L10(L12)X complex.

In terms of biological role, forms part of the ribosomal stalk, playing a central role in the interaction of the ribosome with GTP-bound translation factors. This chain is Large ribosomal subunit protein uL10, found in Ralstonia nicotianae (strain ATCC BAA-1114 / GMI1000) (Ralstonia solanacearum).